The sequence spans 166 residues: MGQMFNPLDFVYIAEFLEESKVDKKEAKNRTIIGRYYYASFLFLRGILKENLKNYNSKEAKEFLYLIELSNSHKIILDFLNVLKKEDGKFRRVYNALSILRDLRNASDYELESPARVKSIKEMVDFNDDYYVELSKNKYKIIVNSKSDVENILKDRSKIDKILRKI.

The protein to M.jannaschii MJ0992.

This is an uncharacterized protein from Methanocaldococcus jannaschii (strain ATCC 43067 / DSM 2661 / JAL-1 / JCM 10045 / NBRC 100440) (Methanococcus jannaschii).